Consider the following 286-residue polypeptide: NAD kinase (286 aa).

Residue Asp74 is the Proton acceptor of the active site. NAD(+) contacts are provided by residues 74–75 (DG), 148–149 (ND), Asp178, Ala186, 189–194 (TAYNLS), and Gln244.

The protein belongs to the NAD kinase family. The cofactor is a divalent metal cation.

It localises to the cytoplasm. The catalysed reaction is NAD(+) + ATP = ADP + NADP(+) + H(+). Its function is as follows. Involved in the regulation of the intracellular balance of NAD and NADP, and is a key enzyme in the biosynthesis of NADP. Catalyzes specifically the phosphorylation on 2'-hydroxyl of the adenosine moiety of NAD to yield NADP. The protein is NAD kinase of Campylobacter jejuni subsp. jejuni serotype O:23/36 (strain 81-176).